The sequence spans 99 residues: SAGA-associated factor 11 (99 aa).

The SGF11-type zinc finger occupies 71-92 (IHCENCGRDVSANRLAAHLQRC).

This sequence belongs to the SGF11 family. In terms of assembly, component of the 1.8 MDa SAGA transcription coactivator-HAT complex. SAGA is built of 5 distinct domains with specialized functions. Within the SAGA complex, SUS1, SGF11, SGF73 and UBP8 form an additional subcomplex of SAGA called the DUB module (deubiquitination module). Interacts directly with SGF73, SUS1 and UBP8.

The protein localises to the nucleus. Functionally, functions as a component of the transcription regulatory histone acetylation (HAT) complex SAGA. At the promoters, SAGA is required for recruitment of the basal transcription machinery. It influences RNA polymerase II transcriptional activity through different activities such as TBP interaction and promoter selectivity, interaction with transcription activators, and chromatin modification through histone acetylation and deubiquitination. SAGA acetylates nucleosomal histone H3 to some extent (to form H3K9ac, H3K14ac, H3K18ac and H3K23ac). SAGA interacts with DNA via upstream activating sequences (UASs). Involved in transcriptional regulation of a subset of SAGA-regulated genes. Within the SAGA complex, participates in a subcomplex, that specifically deubiquitinates histones H2B. This chain is SAGA-associated factor 11, found in Saccharomyces cerevisiae (strain YJM789) (Baker's yeast).